Here is a 243-residue protein sequence, read N- to C-terminus: MKAEQNTDAHNVDRGEIAKFEAVASRWWDLEGEFKPLHRINPLRLDWIAQHANGLFGKKVLDVGCGGGILSESMAREGANVTGLDMGAEPLQVARLHALESGVNIDYVQQTVEEHADRFAGQYDVVTCMEMLEHVPDPRSVVHACAKLVKPGGEVFFSTLNRNSKSWLMAIVGAEYILRMVPRGTHDIKKFIRPGELLNWVDETPLRERHIIGLHYNPLTNRFKLAPGVDVNYMVHTHRNITD.

S-adenosyl-L-methionine contacts are provided by Arg-44, Gly-64, Asp-85, and Met-129.

This sequence belongs to the methyltransferase superfamily. UbiG/COQ3 family.

It carries out the reaction a 3-demethylubiquinol + S-adenosyl-L-methionine = a ubiquinol + S-adenosyl-L-homocysteine + H(+). It catalyses the reaction a 3-(all-trans-polyprenyl)benzene-1,2-diol + S-adenosyl-L-methionine = a 2-methoxy-6-(all-trans-polyprenyl)phenol + S-adenosyl-L-homocysteine + H(+). It participates in cofactor biosynthesis; ubiquinone biosynthesis. O-methyltransferase that catalyzes the 2 O-methylation steps in the ubiquinone biosynthetic pathway. The protein is Ubiquinone biosynthesis O-methyltransferase of Erwinia tasmaniensis (strain DSM 17950 / CFBP 7177 / CIP 109463 / NCPPB 4357 / Et1/99).